The chain runs to 362 residues: GTP cyclohydrolase FolE2 (362 aa).

The protein belongs to the GTP cyclohydrolase IV family.

It carries out the reaction GTP + H2O = 7,8-dihydroneopterin 3'-triphosphate + formate + H(+). The protein operates within cofactor biosynthesis; 7,8-dihydroneopterin triphosphate biosynthesis; 7,8-dihydroneopterin triphosphate from GTP: step 1/1. In terms of biological role, converts GTP to 7,8-dihydroneopterin triphosphate. This is GTP cyclohydrolase FolE2 from Jannaschia sp. (strain CCS1).